A 145-amino-acid chain; its full sequence is Aminoglycoside N(6')-acetyltransferase type 1 (145 aa).

The N-acetyltransferase domain occupies 1-145 (MNIKPASEAS…KVVYFSKKID (145 aa)). Substrate is bound by residues Trp-22, Tyr-65, and Glu-78. 80–82 (IYV) provides a ligand contact to acetyl-CoA. Asp-114 is a binding site for substrate. Asn-119 contributes to the acetyl-CoA binding site. Position 135 (Glu-135) interacts with substrate.

Homodimer.

The enzyme catalyses kanamycin B + acetyl-CoA = N(6')-acetylkanamycin B + CoA + H(+). Functionally, catalyzes the transfer of an acetyl group from acetyl-CoA to the 6'-amino group of aminoglycoside molecules conferring resistance to antibiotics containing the purpurosamine ring including amikacin, kanamycin, tobramycin and netilmicin. The polypeptide is Aminoglycoside N(6')-acetyltransferase type 1 (Acinetobacter haemolyticus).